The primary structure comprises 563 residues: TSET complex member tstC (563 aa).

Disordered stretches follow at residues 146 to 170 (SPHQ…SFIT), 192 to 213 (NSLS…NNDS), 235 to 298 (VLNS…NYNN), 376 to 395 (HPNA…NEFK), and 428 to 563 (GSAS…FLNF). The segment covering 379-395 (AGKEAKEKEKEKENEFK) has biased composition (basic and acidic residues). Positions 428 to 459 (GSASSKSSPSTSPLSSSYNPSSPETSENSFSA) are enriched in low complexity. A compositionally biased stretch (polar residues) spans 460 to 473 (TPISDSNSLKNSID). Composition is skewed to low complexity over residues 474–487 (NNNN…NNNN) and 507–543 (NNSK…SSAA). Residues 552-563 (NSAKTKMNFLNF) show a composition bias toward polar residues.

As to quaternary structure, component of the TSET complex, a heterohexamer composed of tstA, tstB, tstC, tstD, tstE and tstF, which may act in plasma membrane turnover. tstA, tstB, tstC and tstD are likely to be the core complex members with tstE and tstF acting as associated scaffold proteins.

This is TSET complex member tstC from Dictyostelium discoideum (Social amoeba).